Reading from the N-terminus, the 603-residue chain is Isocitrate dehydrogenase kinase/phosphatase (603 aa).

ATP-binding positions include 327–333 (APGIKGL) and Lys-348. Asp-383 is an active-site residue.

It belongs to the AceK family.

It localises to the cytoplasm. The catalysed reaction is L-seryl-[isocitrate dehydrogenase] + ATP = O-phospho-L-seryl-[isocitrate dehydrogenase] + ADP + H(+). In terms of biological role, bifunctional enzyme which can phosphorylate or dephosphorylate isocitrate dehydrogenase (IDH) on a specific serine residue. This is a regulatory mechanism which enables bacteria to bypass the Krebs cycle via the glyoxylate shunt in response to the source of carbon. When bacteria are grown on glucose, IDH is fully active and unphosphorylated, but when grown on acetate or ethanol, the activity of IDH declines drastically concomitant with its phosphorylation. This Burkholderia thailandensis (strain ATCC 700388 / DSM 13276 / CCUG 48851 / CIP 106301 / E264) protein is Isocitrate dehydrogenase kinase/phosphatase.